A 227-amino-acid polypeptide reads, in one-letter code: Cytochrome c oxidase subunit 2 (227 aa).

Over 1 to 14 the chain is Mitochondrial intermembrane; the sequence is MAHPAQLGLQDATS. Residues 15–45 traverse the membrane as a helical segment; that stretch reads PVMEELITFHDHALMAMSLISLLVLYALFST. Over 46–59 the chain is Mitochondrial matrix; sequence LTTKMTNTNITDAQ. Residues 60–87 form a helical membrane-spanning segment; that stretch reads EMETIWTILPAIILVLIAFPSLRILYMT. Residues 88–227 lie on the Mitochondrial intermembrane side of the membrane; that stretch reads DEVNNPSFTI…IFEMGPVFTL (140 aa). Residues His161, Cys196, Glu198, Cys200, His204, and Met207 each coordinate Cu cation. Residue Glu198 participates in Mg(2+) binding.

This sequence belongs to the cytochrome c oxidase subunit 2 family. In terms of assembly, component of the cytochrome c oxidase (complex IV, CIV), a multisubunit enzyme composed of 14 subunits. The complex is composed of a catalytic core of 3 subunits MT-CO1, MT-CO2 and MT-CO3, encoded in the mitochondrial DNA, and 11 supernumerary subunits COX4I, COX5A, COX5B, COX6A, COX6B, COX6C, COX7A, COX7B, COX7C, COX8 and NDUFA4, which are encoded in the nuclear genome. The complex exists as a monomer or a dimer and forms supercomplexes (SCs) in the inner mitochondrial membrane with NADH-ubiquinone oxidoreductase (complex I, CI) and ubiquinol-cytochrome c oxidoreductase (cytochrome b-c1 complex, complex III, CIII), resulting in different assemblies (supercomplex SCI(1)III(2)IV(1) and megacomplex MCI(2)III(2)IV(2)). Found in a complex with TMEM177, COA6, COX18, COX20, SCO1 and SCO2. Interacts with TMEM177 in a COX20-dependent manner. Interacts with COX20. Interacts with COX16. Cu cation is required as a cofactor.

Its subcellular location is the mitochondrion inner membrane. The catalysed reaction is 4 Fe(II)-[cytochrome c] + O2 + 8 H(+)(in) = 4 Fe(III)-[cytochrome c] + 2 H2O + 4 H(+)(out). Component of the cytochrome c oxidase, the last enzyme in the mitochondrial electron transport chain which drives oxidative phosphorylation. The respiratory chain contains 3 multisubunit complexes succinate dehydrogenase (complex II, CII), ubiquinol-cytochrome c oxidoreductase (cytochrome b-c1 complex, complex III, CIII) and cytochrome c oxidase (complex IV, CIV), that cooperate to transfer electrons derived from NADH and succinate to molecular oxygen, creating an electrochemical gradient over the inner membrane that drives transmembrane transport and the ATP synthase. Cytochrome c oxidase is the component of the respiratory chain that catalyzes the reduction of oxygen to water. Electrons originating from reduced cytochrome c in the intermembrane space (IMS) are transferred via the dinuclear copper A center (CU(A)) of subunit 2 and heme A of subunit 1 to the active site in subunit 1, a binuclear center (BNC) formed by heme A3 and copper B (CU(B)). The BNC reduces molecular oxygen to 2 water molecules using 4 electrons from cytochrome c in the IMS and 4 protons from the mitochondrial matrix. This is Cytochrome c oxidase subunit 2 (MT-CO2) from Mandrillus leucophaeus (Drill).